The following is a 50-amino-acid chain: Large ribosomal subunit protein bL32 (50 aa).

Residues 1-26 (MAVPKRRVSHTRSAKRRTHYKITLKK) are compositionally biased toward basic residues. The disordered stretch occupies residues 1–50 (MAVPKRRVSHTRSAKRRTHYKITLKKPVKDSDGSWKMPHMVNPNTGEYKN).

Belongs to the bacterial ribosomal protein bL32 family.

The polypeptide is Large ribosomal subunit protein bL32 (Aliarcobacter butzleri (strain RM4018) (Arcobacter butzleri)).